A 381-amino-acid chain; its full sequence is L-lactate dehydrogenase (381 aa).

An FMN hydroxy acid dehydrogenase domain is found at 1 to 380 (MIISASTDYR…TRDSLVRELG (380 aa)). Y24 is a binding site for substrate. 2 residues coordinate FMN: S106 and Q127. Y129 is a binding site for substrate. Residue T155 coordinates FMN. Position 164 (R164) interacts with substrate. K251 lines the FMN pocket. H275 acts as the Proton acceptor in catalysis. R278 contributes to the substrate binding site. 306 to 330 (DSGIRSGLDVVRMIALGADTVLIGR) is a binding site for FMN.

Belongs to the FMN-dependent alpha-hydroxy acid dehydrogenase family. Homotetramer. It depends on FMN as a cofactor.

Its subcellular location is the cell inner membrane. It catalyses the reaction (S)-lactate + A = pyruvate + AH2. Functionally, catalyzes the conversion of L-lactate to pyruvate. Is coupled to the respiratory chain. This chain is L-lactate dehydrogenase, found in Pseudomonas putida (strain GB-1).